The chain runs to 739 residues: Malate synthase G (739 aa).

Polar residues predominate over residues 1-18 (MTEQELLSAQTADNAGTD). The tract at residues 1 to 23 (MTEQELLSAQTADNAGTDSTERV) is disordered. Acetyl-CoA-binding positions include V135, 142–143 (RF), S292, and R329. R356 serves as the catalytic Proton acceptor. Residues R356, E447, and 472 to 475 (GFLD) contribute to the glyoxylate site. Mg(2+) contacts are provided by E447 and D475. P556 contacts acetyl-CoA. C633 carries the post-translational modification Cysteine sulfenic acid (-SOH). The active-site Proton donor is the D647.

This sequence belongs to the malate synthase family. GlcB subfamily. As to quaternary structure, monomer. It depends on Mg(2+) as a cofactor.

The protein resides in the cytoplasm. The catalysed reaction is glyoxylate + acetyl-CoA + H2O = (S)-malate + CoA + H(+). The protein operates within carbohydrate metabolism; glyoxylate cycle; (S)-malate from isocitrate: step 2/2. With respect to regulation, inhibited by oxalate, glycolate and ATP. In terms of biological role, involved in the glycolate utilization. Catalyzes the condensation and subsequent hydrolysis of acetyl-coenzyme A (acetyl-CoA) and glyoxylate to form malate and CoA. The protein is Malate synthase G of Corynebacterium glutamicum (strain ATCC 13032 / DSM 20300 / JCM 1318 / BCRC 11384 / CCUG 27702 / LMG 3730 / NBRC 12168 / NCIMB 10025 / NRRL B-2784 / 534).